A 279-amino-acid polypeptide reads, in one-letter code: Tryptophan 2,3-dioxygenase (279 aa).

Substrate is bound by residues 48–52, Tyr-110, and Arg-114; that span reads FIVIH. His-237 contacts heme. Thr-251 contacts substrate.

Belongs to the tryptophan 2,3-dioxygenase family. Homotetramer. It depends on heme as a cofactor.

The catalysed reaction is L-tryptophan + O2 = N-formyl-L-kynurenine. The protein operates within amino-acid degradation; L-tryptophan degradation via kynurenine pathway; L-kynurenine from L-tryptophan: step 1/2. In terms of biological role, heme-dependent dioxygenase that catalyzes the oxidative cleavage of the L-tryptophan (L-Trp) pyrrole ring and converts L-tryptophan to N-formyl-L-kynurenine. Catalyzes the oxidative cleavage of the indole moiety. The polypeptide is Tryptophan 2,3-dioxygenase (Exiguobacterium sibiricum (strain DSM 17290 / CCUG 55495 / CIP 109462 / JCM 13490 / 255-15)).